The chain runs to 241 residues: Zinc finger CCHC domain-containing protein 24 (241 aa).

Residues Ser-65 and Ser-93 each carry the phosphoserine modification. Residues 132 to 149 (YLCHLCFNKGHYIKDCPQ) form a CCHC-type zinc finger.

The polypeptide is Zinc finger CCHC domain-containing protein 24 (ZCCHC24) (Homo sapiens (Human)).